A 204-amino-acid polypeptide reads, in one-letter code: Large ribosomal subunit protein eL15 (204 aa).

The protein belongs to the eukaryotic ribosomal protein eL15 family. Component of the large ribosomal subunit.

The protein localises to the cytoplasm. Functionally, component of the large ribosomal subunit. The ribosome is a large ribonucleoprotein complex responsible for the synthesis of proteins in the cell. The polypeptide is Large ribosomal subunit protein eL15 (rpl15) (Siniperca knerii (Big-eye mandarin fish)).